A 244-amino-acid polypeptide reads, in one-letter code: Carbonyl reductase [NADPH] 2 (244 aa).

11 to 39 (LVTGAGKGIGRDTVKALHASGAKVVAVTR) lines the NADP(+) pocket. S42 is subject to Phosphoserine. Residue S136 coordinates substrate. Y149 functions as the Proton acceptor in the catalytic mechanism. Phosphoserine is present on S176.

Belongs to the short-chain dehydrogenases/reductases (SDR) family. Homotetramer. In terms of tissue distribution, predominantly expressed in lung, in ciliated cells, non-ciliated bronchiolar cells and type-II alveolar pneumocytes. Also detected in adipose tissue (at protein level). Low expression in testis, heart, kidney, spleen, brain and liver.

The protein localises to the mitochondrion matrix. The catalysed reaction is a secondary alcohol + NADP(+) = a ketone + NADPH + H(+). May function in the pulmonary metabolism of endogenous carbonyl compounds, such as aliphatic aldehydes and ketones derived from lipid peroxidation, 3-ketosteroids and fatty aldehydes, as well as in xenobiotic metabolism. The chain is Carbonyl reductase [NADPH] 2 (Cbr2) from Mus musculus (Mouse).